The following is a 637-amino-acid chain: 1-deoxy-D-xylulose-5-phosphate synthase 1 (637 aa).

Residues His-74 and 115 to 117 (GHS) each bind thiamine diphosphate. Asp-146 contributes to the Mg(2+) binding site. Residues 147–148 (GS), Asn-175, Tyr-286, and Glu-368 contribute to the thiamine diphosphate site. A Mg(2+)-binding site is contributed by Asn-175.

Belongs to the transketolase family. DXPS subfamily. As to quaternary structure, homodimer. Mg(2+) serves as cofactor. Requires thiamine diphosphate as cofactor.

The catalysed reaction is D-glyceraldehyde 3-phosphate + pyruvate + H(+) = 1-deoxy-D-xylulose 5-phosphate + CO2. Its pathway is metabolic intermediate biosynthesis; 1-deoxy-D-xylulose 5-phosphate biosynthesis; 1-deoxy-D-xylulose 5-phosphate from D-glyceraldehyde 3-phosphate and pyruvate: step 1/1. Catalyzes the acyloin condensation reaction between C atoms 2 and 3 of pyruvate and glyceraldehyde 3-phosphate to yield 1-deoxy-D-xylulose-5-phosphate (DXP). This chain is 1-deoxy-D-xylulose-5-phosphate synthase 1, found in Geobacter sulfurreducens (strain ATCC 51573 / DSM 12127 / PCA).